Reading from the N-terminus, the 497-residue chain is Protein DETOXIFICATION 25 (497 aa).

Helical transmembrane passes span 43–63 (LPST…QAFI), 70–90 (GLAA…GIMA), 121–141 (IVDT…GPIL), 157–177 (IYPW…MQMY), 186–206 (IIGI…WWCV), 216–236 (ALLG…VYVF), 261–281 (LSIS…IIVL), 291–311 (IAIS…NICF), 339–359 (VVLV…LAFG), 381–401 (IVLS…GVAI), 416–436 (SYYA…NFGI), and 438–458 (GLWS…CYVI).

It belongs to the multi antimicrobial extrusion (MATE) (TC 2.A.66.1) family.

Its subcellular location is the membrane. In Arabidopsis thaliana (Mouse-ear cress), this protein is Protein DETOXIFICATION 25.